Consider the following 163-residue polypeptide: Interleukin-17F (163 aa).

The first 30 residues, 1 to 30, serve as a signal peptide directing secretion; that stretch reads MTVKTLHGPAMVKYLLLSILGLAFLSEAAA. Asn83 carries an N-linked (GlcNAc...) asparagine glycan. 2 disulfides stabilise this stretch: Cys102/Cys152 and Cys107/Cys154.

It belongs to the IL-17 family. In terms of assembly, homodimer; disulfide-linked. Heterodimer with IL17A (IL17A-IL17F). Forms complexes with IL17RA and IL17RC receptors with 2:1 binding stoichiometry: two receptor chains for one interleukin molecule. IL17F homodimer forms predominantly complexes with IL17RC homodimer, whereas IL17A-IL17F favors complexes with IL17RA-IL17RC. IL17RA and IL17RC chains cannot distinguish between IL17A and IL17F molecules, potentially enabling the formation of topologically distinct complexes. In terms of tissue distribution, expressed in T-helper 1 and T-helper 2 cells, basophils and mast cells.

The protein localises to the secreted. In terms of biological role, effector cytokine of innate and adaptive immune system involved in antimicrobial host defense and maintenance of tissue integrity. IL17A-IL17F signals via IL17RA-IL17RC heterodimeric receptor complex, triggering homotypic interaction of IL17RA and IL17RC chains with TRAF3IP2 adapter through SEFIR domains. This leads to downstream TRAF6-mediated activation of NF-kappa-B and MAPkinase pathways ultimately resulting in transcriptional activation of cytokines, chemokines, antimicrobial peptides and matrix metalloproteinases, with potential strong immune inflammation. IL17A-IL17F is primarily involved in host defense against extracellular bacteria and fungi by inducing neutrophilic inflammation. As signature effector cytokine of T-helper 17 cells (Th17), primarily induces neutrophil activation and recruitment at infection and inflammatory sites. Stimulates the production of antimicrobial beta-defensins DEFB1, DEFB103A, and DEFB104A by mucosal epithelial cells, limiting the entry of microbes through the epithelial barriers. IL17F homodimer can signal via IL17RC homodimeric receptor complex, triggering downstream activation of TRAF6 and NF-kappa-B signaling pathway. Via IL17RC induces transcriptional activation of IL33, a potent cytokine that stimulates group 2 innate lymphoid cells and adaptive T-helper 2 cells involved in pulmonary allergic response to fungi. Likely via IL17RC, promotes sympathetic innervation of peripheral organs by coordinating the communication between gamma-delta T cells and parenchymal cells. Stimulates sympathetic innervation of thermogenic adipose tissue by driving TGFB1 expression. Regulates the composition of intestinal microbiota and immune tolerance by inducing antimicrobial proteins that specifically control the growth of commensal Firmicutes and Bacteroidetes. The polypeptide is Interleukin-17F (IL17F) (Homo sapiens (Human)).